Reading from the N-terminus, the 359-residue chain is 3-dehydroquinate synthase (359 aa).

NAD(+) contacts are provided by residues 69–74 (DGEKYK), 103–107 (GVVGD), 127–128 (TT), Lys140, Lys149, and 167–170 (TLDT). Glu182, His245, and His262 together coordinate Zn(2+).

It belongs to the sugar phosphate cyclases superfamily. Dehydroquinate synthase family. Co(2+) serves as cofactor. Requires Zn(2+) as cofactor. The cofactor is NAD(+).

The protein localises to the cytoplasm. It catalyses the reaction 7-phospho-2-dehydro-3-deoxy-D-arabino-heptonate = 3-dehydroquinate + phosphate. The protein operates within metabolic intermediate biosynthesis; chorismate biosynthesis; chorismate from D-erythrose 4-phosphate and phosphoenolpyruvate: step 2/7. Functionally, catalyzes the conversion of 3-deoxy-D-arabino-heptulosonate 7-phosphate (DAHP) to dehydroquinate (DHQ). In Ruthia magnifica subsp. Calyptogena magnifica, this protein is 3-dehydroquinate synthase.